Consider the following 510-residue polypeptide: Flagellin A (510 aa).

Belongs to the bacterial flagellin family. In terms of assembly, heteromer of FlaA and FlaB. FlaB is located proximal to the hook while the remainder of the filament is composed of the predominant FlaA.

The protein localises to the secreted. It is found in the bacterial flagellum. Functionally, flagellin is the subunit protein which polymerizes to form the filaments of bacterial flagella. Important for motility and virulence. The protein is Flagellin A (flaA) of Helicobacter pylori (strain ATCC 700392 / 26695) (Campylobacter pylori).